A 373-amino-acid chain; its full sequence is Probable leucine aminopeptidase 1 (373 aa).

The first 18 residues, 1-18, serve as a signal peptide directing secretion; it reads MKLLSVLALSATATSVLG. Zn(2+) is bound by residues H176 and D195. N196 carries N-linked (GlcNAc...) asparagine glycosylation. Residues E234 and D261 each contribute to the Zn(2+) site. N288 is a glycosylation site (N-linked (GlcNAc...) asparagine). C310 and C314 are oxidised to a cystine. H343 is a binding site for Zn(2+).

This sequence belongs to the peptidase M28 family. M28E subfamily. In terms of assembly, monomer. Requires Zn(2+) as cofactor.

The protein resides in the secreted. Its function is as follows. Extracellular aminopeptidase which contributes to pathogenicity. The polypeptide is Probable leucine aminopeptidase 1 (LAP1) (Trichophyton verrucosum (strain HKI 0517)).